The sequence spans 473 residues: Ribulose bisphosphate carboxylase large chain (473 aa).

Positions Met1–Ser2 are excised as a propeptide. Pro3 is subject to N-acetylproline. N6,N6,N6-trimethyllysine is present on Lys14. Residues Asn123 and Thr173 each coordinate substrate. Lys175 acts as the Proton acceptor in catalysis. Lys177 lines the substrate pocket. Positions 201, 203, and 204 each coordinate Mg(2+). Lys201 carries the N6-carboxylysine modification. The active-site Proton acceptor is His294. The substrate site is built by Arg295, His327, and Ser379.

The protein belongs to the RuBisCO large chain family. Type I subfamily. Heterohexadecamer of 8 large chains and 8 small chains; disulfide-linked. The disulfide link is formed within the large subunit homodimers. Mg(2+) is required as a cofactor. The disulfide bond which can form in the large chain dimeric partners within the hexadecamer appears to be associated with oxidative stress and protein turnover.

Its subcellular location is the plastid. The protein localises to the chloroplast. The enzyme catalyses 2 (2R)-3-phosphoglycerate + 2 H(+) = D-ribulose 1,5-bisphosphate + CO2 + H2O. The catalysed reaction is D-ribulose 1,5-bisphosphate + O2 = 2-phosphoglycolate + (2R)-3-phosphoglycerate + 2 H(+). In terms of biological role, ruBisCO catalyzes two reactions: the carboxylation of D-ribulose 1,5-bisphosphate, the primary event in carbon dioxide fixation, as well as the oxidative fragmentation of the pentose substrate in the photorespiration process. Both reactions occur simultaneously and in competition at the same active site. In Monarda didyma (Scarlet bee-balm), this protein is Ribulose bisphosphate carboxylase large chain.